Consider the following 344-residue polypeptide: tRNA N6-adenosine threonylcarbamoyltransferase (344 aa).

2 residues coordinate Fe cation: histidine 114 and histidine 118. Substrate is bound by residues 136-140 (LVSGG), aspartate 170, glycine 183, aspartate 187, and asparagine 278. Aspartate 306 provides a ligand contact to Fe cation. The tract at residues 325–344 (PSPLDVPSDPGLPVMQGQVR) is disordered.

It belongs to the KAE1 / TsaD family. Fe(2+) serves as cofactor.

It is found in the cytoplasm. It catalyses the reaction L-threonylcarbamoyladenylate + adenosine(37) in tRNA = N(6)-L-threonylcarbamoyladenosine(37) in tRNA + AMP + H(+). Its function is as follows. Required for the formation of a threonylcarbamoyl group on adenosine at position 37 (t(6)A37) in tRNAs that read codons beginning with adenine. Is involved in the transfer of the threonylcarbamoyl moiety of threonylcarbamoyl-AMP (TC-AMP) to the N6 group of A37, together with TsaE and TsaB. TsaD likely plays a direct catalytic role in this reaction. The sequence is that of tRNA N6-adenosine threonylcarbamoyltransferase from Mycobacterium tuberculosis (strain ATCC 25177 / H37Ra).